The primary structure comprises 120 residues: Large ribosomal subunit protein bL20 (120 aa).

Belongs to the bacterial ribosomal protein bL20 family.

Its function is as follows. Binds directly to 23S ribosomal RNA and is necessary for the in vitro assembly process of the 50S ribosomal subunit. It is not involved in the protein synthesizing functions of that subunit. This chain is Large ribosomal subunit protein bL20, found in Methylacidiphilum infernorum (isolate V4) (Methylokorus infernorum (strain V4)).